Consider the following 198-residue polypeptide: Segregation and condensation protein B (198 aa).

Residues 167–198 are disordered; the sequence is PKLADPEAEDPDQSEMDLFFDRFNQSKEQEEE. Acidic residues predominate over residues 172-181; sequence PEAEDPDQSE.

It belongs to the ScpB family. Homodimer. Homodimerization may be required to stabilize the binding of ScpA to the Smc head domains. Component of a cohesin-like complex composed of ScpA, ScpB and the Smc homodimer, in which ScpA and ScpB bind to the head domain of Smc. The presence of the three proteins is required for the association of the complex with DNA.

The protein resides in the cytoplasm. Participates in chromosomal partition during cell division. May act via the formation of a condensin-like complex containing Smc and ScpA that pull DNA away from mid-cell into both cell halves. The sequence is that of Segregation and condensation protein B from Listeria innocua serovar 6a (strain ATCC BAA-680 / CLIP 11262).